A 314-amino-acid chain; its full sequence is DNA-directed RNA polymerase subunit alpha (314 aa).

The alpha N-terminal domain (alpha-NTD) stretch occupies residues 1-228; it reads MIEIEKPRIE…EHLNIFVSLT (228 aa). Positions 245–314 are alpha C-terminal domain (alpha-CTD); that stretch reads KEKVLEMSIE…DLGLGLRKED (70 aa).

It belongs to the RNA polymerase alpha chain family. In terms of assembly, homodimer. The RNAP catalytic core consists of 2 alpha, 1 beta, 1 beta' and 1 omega subunit. When a sigma factor is associated with the core the holoenzyme is formed, which can initiate transcription.

It catalyses the reaction RNA(n) + a ribonucleoside 5'-triphosphate = RNA(n+1) + diphosphate. In terms of biological role, DNA-dependent RNA polymerase catalyzes the transcription of DNA into RNA using the four ribonucleoside triphosphates as substrates. This chain is DNA-directed RNA polymerase subunit alpha, found in Staphylococcus epidermidis (strain ATCC 35984 / DSM 28319 / BCRC 17069 / CCUG 31568 / BM 3577 / RP62A).